Reading from the N-terminus, the 154-residue chain is Large ribosomal subunit protein uL13 (154 aa).

It belongs to the universal ribosomal protein uL13 family. In terms of assembly, part of the 50S ribosomal subunit.

Functionally, this protein is one of the early assembly proteins of the 50S ribosomal subunit, although it is not seen to bind rRNA by itself. It is important during the early stages of 50S assembly. The chain is Large ribosomal subunit protein uL13 from Allorhizobium ampelinum (strain ATCC BAA-846 / DSM 112012 / S4) (Agrobacterium vitis (strain S4)).